The primary structure comprises 302 residues: MIVDQNVAFAPAKINLYLHVTGRRSDGYHLLDSLAVFAEACDVLRYRDGDQAAGLGLQLEGPGAETLRAEPDNLVLRAGRALAALAGIKPRGTIMLDKRLPVASGIGGGSSDAAAALRLLSRVWGVSPAAEDLHRIATSLGADVPVCLEPGTYRMRGIGERLEALPAMPEIGLLLANPGVPVSTPEVFRNREHGFTPEATLASRWPDMAALLRDLQLSRNDLQPPAMRLCPAIGILLHALEGLPGARLTRMSGSGATCFTLFDHPDAARDAAQLLQAQSGMGGWCWGGGLYKTASALDKTTL.

Lys13 is an active-site residue. Pro101 to Ser111 is an ATP binding site. Residue Asp143 is part of the active site.

This sequence belongs to the GHMP kinase family. IspE subfamily.

It carries out the reaction 4-CDP-2-C-methyl-D-erythritol + ATP = 4-CDP-2-C-methyl-D-erythritol 2-phosphate + ADP + H(+). The protein operates within isoprenoid biosynthesis; isopentenyl diphosphate biosynthesis via DXP pathway; isopentenyl diphosphate from 1-deoxy-D-xylulose 5-phosphate: step 3/6. Functionally, catalyzes the phosphorylation of the position 2 hydroxy group of 4-diphosphocytidyl-2C-methyl-D-erythritol. The polypeptide is 4-diphosphocytidyl-2-C-methyl-D-erythritol kinase (Granulibacter bethesdensis (strain ATCC BAA-1260 / CGDNIH1)).